Here is a 311-residue protein sequence, read N- to C-terminus: MLKIVANTADLIGDTPLVRLNRLQPENAAQVYLKLEFFNPSGSVKDRAAYQMIIEAEQNGLLKPGSVIIEPTSGNTGIGLAMNAAARGYKAILVMPDTMTKERINLLKAYGAEVVLTPGEERMPGSIKKAKELAEQIPNSYIPMQFDNTANPDAHRKTTAPEIARAIEEIGKPLGAFVASSGTGGTITGTGEALKELFPDITVHVVEPAGSPVLSGGKPGAHKLVGTSPGFIPPILNEDVYDEIIKISDEDAYTTTRRLAAEEGILVGPSSGAACFAAIETAKRLSPDKVVVCMTADTGERYLSTDLWSFI.

K45 bears the N6-(pyridoxal phosphate)lysine mark. Residues N75, 182–186 (GTGGT), and S270 contribute to the pyridoxal 5'-phosphate site.

Belongs to the cysteine synthase/cystathionine beta-synthase family. Pyridoxal 5'-phosphate is required as a cofactor.

It catalyses the reaction O-acetyl-L-serine + hydrogen sulfide = L-cysteine + acetate. It functions in the pathway amino-acid biosynthesis; L-cysteine biosynthesis; L-cysteine from L-serine: step 2/2. This Bacillus subtilis (strain 168) protein is Probable cysteine synthase (ytkP).